The sequence spans 191 residues: Protein DMP10 (191 aa).

The next 4 helical transmembrane spans lie at 15–35 (FANLLPTGTALIFETLLPSFS), 48–68 (LLTITLISFCAAACFFSSFTD), 114–134 (LSFVDFVHAFVSVIVFLALAV), and 158–178 (LMIKYFAVMVLTMASFFFAIF).

The protein belongs to the plant DMP1 protein family. As to expression, restricted to flowers.

The protein localises to the membrane. In terms of biological role, involved in membrane remodeling. The sequence is that of Protein DMP10 from Arabidopsis thaliana (Mouse-ear cress).